The chain runs to 173 residues: Ribosome maturation factor RimM (173 aa).

A PRC barrel domain is found at 96 to 169; it reads PDEYYDHQLE…LVEIDPPEGL (74 aa).

This sequence belongs to the RimM family. In terms of assembly, binds ribosomal protein uS19.

It localises to the cytoplasm. An accessory protein needed during the final step in the assembly of 30S ribosomal subunit, possibly for assembly of the head region. Essential for efficient processing of 16S rRNA. May be needed both before and after RbfA during the maturation of 16S rRNA. It has affinity for free ribosomal 30S subunits but not for 70S ribosomes. The polypeptide is Ribosome maturation factor RimM (Mycobacterium sp. (strain JLS)).